The sequence spans 316 residues: Vacuolar morphogenesis protein 7 (316 aa).

Positions 1–124 (MAANSVGKMS…QDFLQLSKPN (124 aa)) constitute a PX domain. Residues 168–186 (RARTKLHKLRERLEQDVQK) are a coiled coil. The 63-residue stretch at 250–312 (MQMVRDQEQE…QIANKKARHF (63 aa)) folds into the t-SNARE coiled-coil homology domain.

As to quaternary structure, possibly multimeric. Associates with VAM3.

The protein localises to the vacuole. In terms of biological role, essential for proper morphogenesis of the vacuole. May exist as structural reinforcement on the surface of the vacuolar membrane and be required for maintenance against rupture by osmotic pressure. The chain is Vacuolar morphogenesis protein 7 (VAM7) from Saccharomyces cerevisiae (strain ATCC 204508 / S288c) (Baker's yeast).